Reading from the N-terminus, the 517-residue chain is Ascochitine biosynthesis cluster MFS transporter (517 aa).

Residues 1-12 (MSPDSRDPEAQR) are compositionally biased toward basic and acidic residues. Residues 1 to 45 (MSPDSRDPEAQRDVGLTKNTSSVNIPLESVKTDKTSNASPIMGPG) are disordered. The N-linked (GlcNAc...) asparagine glycan is linked to Asn19. Transmembrane regions (helical) follow at residues 75 to 95 (WVIT…STIF), 111 to 131 (VVMT…PLIW), 141 to 161 (LTPF…VGVA), 172 to 192 (FFIG…LADI), 204 to 224 (VYAA…GFVV), 232 to 252 (WTAW…LVFV), 308 to 328 (ILLL…LFFV), 347 to 367 (ALPL…ILFV), 390 to 410 (LMMV…WTSS), 421 to 441 (AGFP…SFLI), 457 to 475 (LIRS…PMYH), and 485 to 505 (LLGF…YYGP).

It belongs to the major facilitator superfamily. CAR1 family.

The protein localises to the membrane. MFS transporter; part of the gene cluster that mediates the biosynthesis the mycotoxin ascochitine, an o-quinone methide that plays a possible protective role against other microbial competitors in nature and is considered to be important for pathogenicity of legume-associated Didymella species. The chain is Ascochitine biosynthesis cluster MFS transporter from Didymella fabae (Leaf and pod spot disease fungus).